Reading from the N-terminus, the 324-residue chain is UDP-N-acetylenolpyruvoylglucosamine reductase (324 aa).

Residues 36–203 (FRAGGLAELM…THAIFEGFPE (168 aa)) form the FAD-binding PCMH-type domain. The active site involves arginine 183. The active-site Proton donor is serine 232. Residue glutamate 302 is part of the active site.

Belongs to the MurB family. The cofactor is FAD.

Its subcellular location is the cytoplasm. The catalysed reaction is UDP-N-acetyl-alpha-D-muramate + NADP(+) = UDP-N-acetyl-3-O-(1-carboxyvinyl)-alpha-D-glucosamine + NADPH + H(+). Its pathway is cell wall biogenesis; peptidoglycan biosynthesis. Its function is as follows. Cell wall formation. The chain is UDP-N-acetylenolpyruvoylglucosamine reductase from Sinorhizobium fredii (strain NBRC 101917 / NGR234).